Here is a 213-residue protein sequence, read N- to C-terminus: Uridine kinase (213 aa).

Residue 13–20 (GGSCSGKT) coordinates ATP.

It belongs to the uridine kinase family.

The protein resides in the cytoplasm. The enzyme catalyses uridine + ATP = UMP + ADP + H(+). The catalysed reaction is cytidine + ATP = CMP + ADP + H(+). Its pathway is pyrimidine metabolism; CTP biosynthesis via salvage pathway; CTP from cytidine: step 1/3. It functions in the pathway pyrimidine metabolism; UMP biosynthesis via salvage pathway; UMP from uridine: step 1/1. This is Uridine kinase (udk) from Mycoplasma pneumoniae (strain ATCC 29342 / M129 / Subtype 1) (Mycoplasmoides pneumoniae).